Reading from the N-terminus, the 994-residue chain is MPRRQILSSEEQERLLVIPDDEIILTRMCFLNEQDIALINKHRRPANRLGFAVLLCYLRGPGFIPDKSNVPHSSVISRIASRLKLQPDLWPEYASREQTRWEHLTELYRYLKLSPFSRSLQKDCIRHLHPYAMRTDKGFMLAEEMLNWLHSNNVIFPSVDVIERTLAEAVTLADRAVFSALTAQLEKQHKSALDSLLKSEGEQASRLAWLLQPPGKINGKNVLQHIDRLNSIAALGLPDGITLSIHQNRLLKLAREGRKMSSRDLAKFTDVRRYATLVCVIQEAQATLTDEVIELHERILGTLFSRAKRTQAERLQLTGKLIQSKLKQYVTVGQALLHARESGEDPWAAIEDVLPWQEFINSLEETQFLSRKGNFDPLHLITEKYSTLRKYAPRMLSALQFIATPPAQTLSDALDTIRDMYRKQLRKVPPAAPTGFIPESWRKLVLTPSGIDRKYYEFCVMNELKGALRSGDIWVKGSRRYRNFDDYLIPAAEFEKSRHNDQLQLAVQTDCRAYLQARMTLLASRLEEVNAMALAGDLPDVDISDKGVKITPLENSVPSGASPFADLVYGMLPHPKITEILEEVDNWTGFTRHFAHLKNNNVRPKDGRLLLTTILADGINLGLTKMAESCPGATKSSLEGIQAWYIRDETYSAALAELVNAQKARPLAAFWGDGTTSSSDGQNFRVGSHGRYAGQVNLKYGQEPGVQIYTHISDQYSPFYAKVISRVRDSTHVLDGLLYHESDLEITEHYTDTAGFTEHVFALMHLLGFAFAPRIRDLHDKRLFIHGKAERYPGLQSVISTTSLNIKDIEAHWDEILRLAASIKQGTVTASLMIKKLASYPKQNGLAKALREIGRIERTLFMLDWFRDPGLRRRVQAGLNKGEARNALARAVFMHRLGEIRDRGLENQSYRASGLTLLTAAITLWNTVYIERAIESLKRKGIPINNQLVSHLSPLGWEHINLSGDYVWRNNIKLGSGKYRSLRTVDTELYKKQS.

The protein belongs to the transposase 7 family.

Required for transposition of transposon Tn2501. The sequence is that of Transposase for transposon Tn2501 (tnpA) from Escherichia coli.